The chain runs to 405 residues: Acetylornithine/succinyldiaminopimelate aminotransferase (405 aa).

Residues 107 to 108 (GA) and Phe140 contribute to the pyridoxal 5'-phosphate site. Arg143 contributes to the N(2)-acetyl-L-ornithine binding site. 225-228 (DEVQ) is a pyridoxal 5'-phosphate binding site. An N6-(pyridoxal phosphate)lysine modification is found at Lys254. Thr282 is a binding site for N(2)-acetyl-L-ornithine. Thr283 contacts pyridoxal 5'-phosphate.

The protein belongs to the class-III pyridoxal-phosphate-dependent aminotransferase family. ArgD subfamily. Homodimer. Requires pyridoxal 5'-phosphate as cofactor.

The protein localises to the cytoplasm. The catalysed reaction is N(2)-acetyl-L-ornithine + 2-oxoglutarate = N-acetyl-L-glutamate 5-semialdehyde + L-glutamate. It carries out the reaction N-succinyl-(2S,6S)-2,6-diaminopimelate + 2-oxoglutarate = (S)-2-succinylamino-6-oxoheptanedioate + L-glutamate. Its pathway is amino-acid biosynthesis; L-arginine biosynthesis; N(2)-acetyl-L-ornithine from L-glutamate: step 4/4. It functions in the pathway amino-acid biosynthesis; L-lysine biosynthesis via DAP pathway; LL-2,6-diaminopimelate from (S)-tetrahydrodipicolinate (succinylase route): step 2/3. Involved in both the arginine and lysine biosynthetic pathways. The protein is Acetylornithine/succinyldiaminopimelate aminotransferase of Yersinia pestis.